The primary structure comprises 510 residues: Beta-glucosidase 40 (510 aa).

A signal peptide spans 1 to 29; it reads MAHRRLIMTMTKMMMMVTMMMMMDKTCIC. Residues Gln51, His152, and 197-198 contribute to the a beta-D-glucoside site; that span reads NE. Glu198 serves as the catalytic Proton donor. A disulfide bond links Cys217 and Cys225. 2 N-linked (GlcNAc...) asparagine glycosylation sites follow: Asn229 and Asn278. A beta-D-glucoside is bound at residue Tyr341. A glycan (N-linked (GlcNAc...) asparagine) is linked at Asn349. A beta-D-glucoside is bound by residues Glu414, Trp464, 471–472, and Phe480; that span reads EW. Glu414 acts as the Nucleophile in catalysis. The N-linked (GlcNAc...) asparagine glycan is linked to Asn507.

This sequence belongs to the glycosyl hydrolase 1 family.

It catalyses the reaction Hydrolysis of terminal, non-reducing beta-D-glucosyl residues with release of beta-D-glucose.. The polypeptide is Beta-glucosidase 40 (Arabidopsis thaliana (Mouse-ear cress)).